The following is a 1146-amino-acid chain: Transcription-repair-coupling factor (1146 aa).

The 162-residue stretch at 617–778 folds into the Helicase ATP-binding domain; the sequence is DMCQPKAMDR…MNGIRDLSII (162 aa). 630 to 637 serves as a coordination point for ATP; that stretch reads GDVGFGKT. The DEEH box signature appears at 731–734; sequence DEEH. The Helicase C-terminal domain occupies 800-953; sequence VREAILREIL…GFILATHDLE (154 aa).

In the N-terminal section; belongs to the UvrB family. The protein in the C-terminal section; belongs to the helicase family. RecG subfamily.

Its subcellular location is the cytoplasm. In terms of biological role, couples transcription and DNA repair by recognizing RNA polymerase (RNAP) stalled at DNA lesions. Mediates ATP-dependent release of RNAP and its truncated transcript from the DNA, and recruitment of nucleotide excision repair machinery to the damaged site. This Haemophilus influenzae (strain ATCC 51907 / DSM 11121 / KW20 / Rd) protein is Transcription-repair-coupling factor.